The primary structure comprises 52 residues: uncharacterized protein (52 aa).

Positions Met1 to Met52 are disordered. The segment covering Lys16–Lys25 has biased composition (basic and acidic residues). Residues Pro27–Met52 show a composition bias toward gly residues.

This is an uncharacterized protein from Dictyostelium discoideum (Social amoeba).